Consider the following 286-residue polypeptide: Putative WUSCHEL-related homeobox 2 (286 aa).

Disordered regions lie at residues 1-25 and 128-152; these read MAPAVQQQQSGGGGGSTGAAAVGST and SSSSSCGGGLNEDANSLLSPTSPTT. The segment at residues 23–87 is a DNA-binding region (homeobox; WUS-type); it reads GSTTRWCPTP…NHKARDRQKL (65 aa).

The protein belongs to the WUS homeobox family.

The protein resides in the nucleus. Its function is as follows. Transcription factor which may be involved in developmental processes. This is Putative WUSCHEL-related homeobox 2 (WOX2) from Oryza sativa subsp. indica (Rice).